A 264-amino-acid polypeptide reads, in one-letter code: Thymidylate synthase (264 aa).

Residue arginine 21 participates in dUMP binding. Histidine 51 contacts (6R)-5,10-methylene-5,6,7,8-tetrahydrofolate. 126–127 is a dUMP binding site; sequence RR. The active-site Nucleophile is the cysteine 146. DUMP is bound by residues 166-169, asparagine 177, and 207-209; these read RSCD and HLY. Aspartate 169 is a binding site for (6R)-5,10-methylene-5,6,7,8-tetrahydrofolate. Alanine 263 provides a ligand contact to (6R)-5,10-methylene-5,6,7,8-tetrahydrofolate.

It belongs to the thymidylate synthase family. Bacterial-type ThyA subfamily. In terms of assembly, homodimer.

Its subcellular location is the cytoplasm. It catalyses the reaction dUMP + (6R)-5,10-methylene-5,6,7,8-tetrahydrofolate = 7,8-dihydrofolate + dTMP. It functions in the pathway pyrimidine metabolism; dTTP biosynthesis. Catalyzes the reductive methylation of 2'-deoxyuridine-5'-monophosphate (dUMP) to 2'-deoxythymidine-5'-monophosphate (dTMP) while utilizing 5,10-methylenetetrahydrofolate (mTHF) as the methyl donor and reductant in the reaction, yielding dihydrofolate (DHF) as a by-product. This enzymatic reaction provides an intracellular de novo source of dTMP, an essential precursor for DNA biosynthesis. The protein is Thymidylate synthase of Edwardsiella ictaluri (strain 93-146).